Consider the following 205-residue polypeptide: TATA-box-binding protein (205 aa).

Tandem repeats lie at residues 27 to 103 and 117 to 194.

It belongs to the TBP family. Belongs to the TFIID complex together with the TBP-associated factors (TAFs). Binds DNA as monomer.

The protein localises to the nucleus. In terms of biological role, general transcription factor that functions at the core of the DNA-binding multiprotein factor TFIID. Binding of TFIID to the TATA box is the initial transcriptional step of the pre-initiation complex (PIC), playing a role in the activation of eukaryotic genes transcribed by RNA polymerase II. This chain is TATA-box-binding protein (tbpA), found in Dictyostelium discoideum (Social amoeba).